A 48-amino-acid polypeptide reads, in one-letter code: Toxin CSTX-14 (48 aa).

4 disulfides stabilise this stretch: Cys-3–Cys-18, Cys-10–Cys-27, Cys-17–Cys-42, and Cys-29–Cys-40.

It belongs to the neurotoxin 19 (CSTX) family. 12 subfamily. As to quaternary structure, heterodimer of A and B chains; disulfide-linked. In terms of processing, contains 4 disulfide bonds. Expressed by the venom gland.

The protein resides in the secreted. The sequence is that of Toxin CSTX-14 from Cupiennius salei (American wandering spider).